The primary structure comprises 599 residues: Adenine deaminase (599 aa).

The protein belongs to the metallo-dependent hydrolases superfamily. Adenine deaminase family. It depends on Mn(2+) as a cofactor.

It carries out the reaction adenine + H2O + H(+) = hypoxanthine + NH4(+). The sequence is that of Adenine deaminase from Clostridium botulinum (strain Loch Maree / Type A3).